The sequence spans 130 residues: uncharacterized protein (130 aa).

The first 26 residues, 1 to 26 (MINNFKGILIIILSFLFLLLFKYSNA), serve as a signal peptide directing secretion. An N-linked (GlcNAc...) asparagine glycan is attached at asparagine 58.

This sequence belongs to the Dictyostelium gerABC family.

The protein localises to the secreted. This is an uncharacterized protein from Dictyostelium discoideum (Social amoeba).